The chain runs to 307 residues: Pantothenate kinase (307 aa).

ATP is bound at residue 90–97; it reads GSVAVGKS.

This sequence belongs to the prokaryotic pantothenate kinase family.

It is found in the cytoplasm. The catalysed reaction is (R)-pantothenate + ATP = (R)-4'-phosphopantothenate + ADP + H(+). It participates in cofactor biosynthesis; coenzyme A biosynthesis; CoA from (R)-pantothenate: step 1/5. The chain is Pantothenate kinase from Limosilactobacillus fermentum (strain NBRC 3956 / LMG 18251) (Lactobacillus fermentum).